A 240-amino-acid polypeptide reads, in one-letter code: uncharacterized protein (240 aa).

The first 17 residues, 1–17, serve as a signal peptide directing secretion; the sequence is MRMAFMLLALLFSFRNA.

This is an uncharacterized protein from Treponema pallidum (strain Nichols).